The primary structure comprises 373 residues: Putative protein YfkA (373 aa).

The 231-residue stretch at 26 to 256 (YGDMQLTNVE…DIRDENTWML (231 aa)) folds into the Radical SAM core domain. 3 residues coordinate [4Fe-4S] cluster: C42, C46, and C49.

Belongs to the radical SAM superfamily. It depends on [4Fe-4S] cluster as a cofactor.

The chain is Putative protein YfkA (yfkA) from Bacillus subtilis (strain 168).